A 67-amino-acid chain; its full sequence is MKAKDLRERTTEHLRELEKSLAAGLFEARFKNFTNRLNDTATIRKAKRDLARVKTILTQRARAEEKA.

Belongs to the universal ribosomal protein uL29 family.

The sequence is that of Large ribosomal subunit protein uL29 from Sorangium cellulosum (strain So ce56) (Polyangium cellulosum (strain So ce56)).